The chain runs to 467 residues: Immunoglobulin superfamily member 21 (467 aa).

Residues 1–24 form the signal peptide; the sequence is MRTAPSLRRCVCLLLAAILDLARG. An Ig-like 1 domain is found at 25–132; sequence YLTVNIEPLP…RATREKVVLA (108 aa). A disulfide bridge links Cys-46 with Cys-116. 2 N-linked (GlcNAc...) asparagine glycosylation sites follow: Asn-82 and Asn-165. A disordered region spans residues 229–259; that stretch reads LSLLDAENRGGRPYTERPSRGLTPDPNILLQ. Basic and acidic residues predominate over residues 234–247; it reads AENRGGRPYTERPS. The Ig-like 2 domain maps to 344 to 429; the sequence is PKIVMTPSRA…GSTDTHTRLI (86 aa). Residues Asn-407 and Asn-444 are each glycosylated (N-linked (GlcNAc...) asparagine).

In terms of assembly, interacts (Ig-like 1 domain) with NRXN2 (via Laminin G-like 1 domain) in a trans-interaction manner.

It localises to the postsynaptic cell membrane. Involved in synaptic inhibition in the brain. Selectively regulates inhibitory presynaptic differentiation through interacting with presynaptic NRXN2. The chain is Immunoglobulin superfamily member 21 from Homo sapiens (Human).